The sequence spans 93 residues: Putative pterin-4-alpha-carbinolamine dehydratase (93 aa).

The protein belongs to the pterin-4-alpha-carbinolamine dehydratase family.

It carries out the reaction (4aS,6R)-4a-hydroxy-L-erythro-5,6,7,8-tetrahydrobiopterin = (6R)-L-erythro-6,7-dihydrobiopterin + H2O. The chain is Putative pterin-4-alpha-carbinolamine dehydratase from Roseiflexus sp. (strain RS-1).